A 339-amino-acid polypeptide reads, in one-letter code: Putative zinc metalloprotease CA_C1796 (339 aa).

A Zn(2+)-binding site is contributed by H20. The active site involves E21. H24 provides a ligand contact to Zn(2+). Transmembrane regions (helical) follow at residues 91–113 (LSIV…CIVG), 275–297 (QLGV…LFLF), and 310–330 (VGFV…VVTI). The 79-residue stretch at 99–177 (IMNLILAAVL…GIKLALKNNG (79 aa)) folds into the PDZ domain.

This sequence belongs to the peptidase M50B family. It depends on Zn(2+) as a cofactor.

It is found in the cell membrane. The chain is Putative zinc metalloprotease CA_C1796 from Clostridium acetobutylicum (strain ATCC 824 / DSM 792 / JCM 1419 / IAM 19013 / LMG 5710 / NBRC 13948 / NRRL B-527 / VKM B-1787 / 2291 / W).